Reading from the N-terminus, the 259-residue chain is uncharacterized protein (259 aa).

It belongs to the methyltransferase superfamily.

This is an uncharacterized protein from Mycobacteroides abscessus (strain ATCC 19977 / DSM 44196 / CCUG 20993 / CIP 104536 / JCM 13569 / NCTC 13031 / TMC 1543 / L948) (Mycobacterium abscessus).